A 245-amino-acid chain; its full sequence is Aliphatic sulfonates import ATP-binding protein SsuB (245 aa).

Positions 6–225 (VTVRGLRRAF…SRGDEGFDDL (220 aa)) constitute an ABC transporter domain. ATP is bound at residue 38 to 45 (GLSGSGKS).

This sequence belongs to the ABC transporter superfamily. Aliphatic sulfonates importer (TC 3.A.1.17.2) family. As to quaternary structure, the complex is composed of two ATP-binding proteins (SsuB), two transmembrane proteins (SsuC) and a solute-binding protein (SsuA).

The protein resides in the cell membrane. It catalyses the reaction ATP + H2O + aliphatic sulfonate-[sulfonate-binding protein]Side 1 = ADP + phosphate + aliphatic sulfonateSide 2 + [sulfonate-binding protein]Side 1.. Functionally, part of the ABC transporter complex SsuABC involved in aliphatic sulfonates import. Responsible for energy coupling to the transport system. In Mycobacterium sp. (strain MCS), this protein is Aliphatic sulfonates import ATP-binding protein SsuB.